Reading from the N-terminus, the 585-residue chain is Arginine--tRNA ligase (585 aa).

The 'HIGH' region motif lies at 131–141 (ANPTGPMHVGH).

It belongs to the class-I aminoacyl-tRNA synthetase family. As to quaternary structure, monomer.

It is found in the cytoplasm. The enzyme catalyses tRNA(Arg) + L-arginine + ATP = L-arginyl-tRNA(Arg) + AMP + diphosphate. The protein is Arginine--tRNA ligase of Brucella melitensis biotype 1 (strain ATCC 23456 / CCUG 17765 / NCTC 10094 / 16M).